A 258-amino-acid polypeptide reads, in one-letter code: uncharacterized protein (258 aa).

Helical transmembrane passes span 8 to 28 (VFLA…IVWF), 38 to 58 (VFFI…GGVH), 70 to 90 (EAMQ…GIFE), 121 to 141 (LEAI…AFAI), 176 to 196 (LGGI…LLVL), 204 to 224 (PLFL…AVLY), and 231 to 251 (HAAA…YWIV).

The protein localises to the cell membrane. This is an uncharacterized protein from Bacillus subtilis (strain 168).